Reading from the N-terminus, the 706-residue chain is Termination factor NPH-I homolog (706 aa).

The Helicase ATP-binding domain occupies 62–227 (IGQGENTRGL…VPCFNMLSGR (166 aa)). An ATP-binding site is contributed by 75-82 (HQMGMGKT). Residues 168-171 (DEAH) carry the DEAH box motif. Positions 417 to 599 (QCLQPLKVLE…HLNSAFRDLL (183 aa)) constitute a Helicase C-terminal domain.

Belongs to the DEAD box helicase family. DEAH subfamily. In terms of assembly, part of the viral DNA-directed RNA polymerase that consists of 8 polII-like subunits (RPB1, RPB2, RPB3, RPB5, RPB6, RPB7, RPB9, RPB10), a capping enzyme and a termination factor.

Its subcellular location is the virion. Putative DNA-dependent ATPase required for providing the needed energy to achieve the termination of early transcripts. The polypeptide is Termination factor NPH-I homolog (African swine fever virus (isolate Warthog/Namibia/Wart80/1980) (ASFV)).